Here is a 1128-residue protein sequence, read N- to C-terminus: GTPase-activating protein BEM3 (1128 aa).

The disordered stretch occupies residues 194–241; sequence SSPTKIHSEQLASPAASVTYTTSRITIKSPNKGSKSPLQERLRSPQNP. Polar residues predominate over residues 209-230; that stretch reads ASVTYTTSRITIKSPNKGSKSP. Ser-254 is modified (phosphoserine). 2 disordered regions span residues 345–391 and 418–486; these read EDLV…TPLS and PVLT…RPHA. The segment covering 366-375 has biased composition (pro residues); that stretch reads LPPPPAPPTF. 2 stretches are compositionally biased toward polar residues: residues 382–391 and 420–478; these read GNIKNSTPLS and LTSS…QGSL. Positions 634–741 constitute a PH domain; the sequence is DNVKDGSLLL…WLSAFSDYID (108 aa). 2 disordered regions span residues 746–777 and 796–838; these read LSLS…NATI and NNNI…DSRR. Polar residues predominate over residues 752 to 764; that stretch reads RNANDTDSASHLS. Over residues 796–815 the composition is skewed to low complexity; sequence NNNISNSSNNIANSDGIDSN. The span at 816–829 shows a compositional bias: polar residues; that stretch reads PSSHSNFLASSSGN. One can recognise a Rho-GAP domain in the interval 913-1128; the sequence is LRLSSHKYQN…EKVDIHIPQV (216 aa).

It localises to the cytoplasm. Functionally, GTPase-activating protein (GAP) for CDC42 and less efficiently for RHO1. Negative regulator of the pheromone-response pathway through the STE20 protein kinase. The chain is GTPase-activating protein BEM3 (BEM3) from Saccharomyces cerevisiae (strain ATCC 204508 / S288c) (Baker's yeast).